Reading from the N-terminus, the 122-residue chain is MIQVQTRLRVGDNSGAKELMCIKVLGGSMRRYASIGDIIVASVKEATPGGVVKKGDVVKAVVVRTKKEIKRKDGTYIRFSENAAVVIKDDRSPRGTRIFGPVARELRDRDFMKIISLAPEVI.

It belongs to the universal ribosomal protein uL14 family. As to quaternary structure, part of the 50S ribosomal subunit. Forms a cluster with proteins L3 and L19. In the 70S ribosome, L14 and L19 interact and together make contacts with the 16S rRNA in bridges B5 and B8.

Binds to 23S rRNA. Forms part of two intersubunit bridges in the 70S ribosome. In Desulfitobacterium hafniense (strain DSM 10664 / DCB-2), this protein is Large ribosomal subunit protein uL14.